Here is a 992-residue protein sequence, read N- to C-terminus: Vacuolar membrane protease (992 aa).

Residues 1–24 (MSPAMANPRVRKFNPIAFTPLPVT) lie on the Cytoplasmic side of the membrane. Residues 25–45 (FITTIVYLAVLILVLVTYLVV) traverse the membrane as a helical segment. At 46 to 390 (PPAPTLEMSP…SAFAVFRLHT (345 aa)) the chain is on the vacuolar side. N-linked (GlcNAc...) asparagine glycosylation is found at asparagine 59, asparagine 115, and asparagine 118. Positions 174 and 186 each coordinate Zn(2+). Catalysis depends on glutamate 220, which acts as the Proton acceptor. Glutamate 221 is a binding site for Zn(2+). An N-linked (GlcNAc...) asparagine glycan is attached at asparagine 237. Zn(2+) contacts are provided by glutamate 246 and histidine 319. The helical transmembrane segment at 391–411 (LFALSVTLLVIGPLVLFITSI) threads the bilayer. Residues 412 to 446 (ALSKTDRMYLFSMSKSLGGASETVSLRGLRGLFRT) lie on the Cytoplasmic side of the membrane. A helical membrane pass occupies residues 447-467 (PIILTVTTVISIGLAYLLEKI). The Vacuolar portion of the chain corresponds to 468 to 474 (NPYIVHS). A helical membrane pass occupies residues 475-495 (SQFAVWSMMLSVWIFVAWFLA). Residues 496–508 (RVADFFRPSALHR) lie on the Cytoplasmic side of the membrane. Residues 509–529 (AYSYTWIFIVTWIMLVISTVY) form a helical membrane-spanning segment. The Vacuolar segment spans residues 530–533 (ANQK). The helical transmembrane segment at 534-554 (GIAAGYFTFFYFAAVFLATWV) threads the bilayer. Topologically, residues 555–671 (SYLELFSLPR…WSWTLPRWTW (117 aa)) are cytoplasmic. A disordered region spans residues 579-620 (RSSSLSSRLLTPSADELPSDIGPNGAENVGDPDETDPTESTS). A helical membrane pass occupies residues 672–692 (ILQLLLLAPIVIILVGQVGLL). Topologically, residues 693-708 (LTTAMSQIGSDGVSTF) are vacuolar. Residues 709–729 (IVYLACALFSTLLFAPLLPFI) traverse the membrane as a helical segment. At 730–736 (HRFTYHV) the chain is on the cytoplasmic side. A helical transmembrane segment spans residues 737–757 (PIFLLLIFIGTLIYNLVAFPF). Topologically, residues 758–992 (SPANRLKIFF…VEASHDFIIQ (235 aa)) are vacuolar. N-linked (GlcNAc...) asparagine glycans are attached at residues asparagine 805, asparagine 846, and asparagine 954.

Belongs to the peptidase M28 family. Requires Zn(2+) as cofactor.

Its subcellular location is the vacuole membrane. May be involved in vacuolar sorting and osmoregulation. The polypeptide is Vacuolar membrane protease (Paracoccidioides brasiliensis (strain Pb18)).